We begin with the raw amino-acid sequence, 384 residues long: Viral protein 1 (384 aa).

The sequence is that of Viral protein 1 from Chaetoceros setoense (Chaetoceros setoense DNA virus).